A 141-amino-acid polypeptide reads, in one-letter code: D-aminoacyl-tRNA deacylase (141 aa).

Positions 133–134 (GP) match the Gly-cisPro motif, important for rejection of L-amino acids motif.

The protein belongs to the DTD family. Homodimer.

Its subcellular location is the cytoplasm. It catalyses the reaction glycyl-tRNA(Ala) + H2O = tRNA(Ala) + glycine + H(+). The catalysed reaction is a D-aminoacyl-tRNA + H2O = a tRNA + a D-alpha-amino acid + H(+). Functionally, an aminoacyl-tRNA editing enzyme that deacylates mischarged D-aminoacyl-tRNAs. Also deacylates mischarged glycyl-tRNA(Ala), protecting cells against glycine mischarging by AlaRS. Acts via tRNA-based rather than protein-based catalysis; rejects L-amino acids rather than detecting D-amino acids in the active site. By recycling D-aminoacyl-tRNA to D-amino acids and free tRNA molecules, this enzyme counteracts the toxicity associated with the formation of D-aminoacyl-tRNA entities in vivo and helps enforce protein L-homochirality. The protein is D-aminoacyl-tRNA deacylase of Streptomyces coelicolor (strain ATCC BAA-471 / A3(2) / M145).